We begin with the raw amino-acid sequence, 157 residues long: Phosphopantetheine adenylyltransferase (157 aa).

The protein belongs to the eukaryotic CoaD family.

Its subcellular location is the cytoplasm. The catalysed reaction is (R)-4'-phosphopantetheine + ATP + H(+) = 3'-dephospho-CoA + diphosphate. Its pathway is cofactor biosynthesis; coenzyme A biosynthesis. Reversibly transfers an adenylyl group from ATP to 4'-phosphopantetheine, yielding dephospho-CoA (dPCoA) and pyrophosphate. The chain is Phosphopantetheine adenylyltransferase from Methanopyrus kandleri (strain AV19 / DSM 6324 / JCM 9639 / NBRC 100938).